The chain runs to 224 residues: Large ribosomal subunit protein uL1c (224 aa).

Belongs to the universal ribosomal protein uL1 family. Part of the 50S ribosomal subunit.

It localises to the plastid. Its subcellular location is the chloroplast. Functionally, binds directly to 23S rRNA. Might be involved in E site tRNA release (Potential). The protein is Large ribosomal subunit protein uL1c (rpl1) of Cyanidioschyzon merolae (strain NIES-3377 / 10D) (Unicellular red alga).